We begin with the raw amino-acid sequence, 414 residues long: Imidazolonepropionase (414 aa).

The span at 1-20 shows a compositional bias: polar residues; the sequence is MSHQLFRNTRIYSPMDSGQP. The disordered stretch occupies residues 1–26; sequence MSHQLFRNTRIYSPMDSGQPSAGKAQ. Positions 81 and 83 each coordinate Fe(3+). H81 and H83 together coordinate Zn(2+). The 4-imidazolone-5-propanoate site is built by R90, Y153, and H186. Y153 contributes to the N-formimidoyl-L-glutamate binding site. Fe(3+) is bound at residue H251. H251 contributes to the Zn(2+) binding site. E254 serves as a coordination point for 4-imidazolone-5-propanoate. Residue D325 participates in Fe(3+) binding. D325 is a Zn(2+) binding site. 2 residues coordinate N-formimidoyl-L-glutamate: N327 and G329. S330 is a 4-imidazolone-5-propanoate binding site.

The protein belongs to the metallo-dependent hydrolases superfamily. HutI family. Zn(2+) serves as cofactor. Fe(3+) is required as a cofactor.

The protein resides in the cytoplasm. It catalyses the reaction 4-imidazolone-5-propanoate + H2O = N-formimidoyl-L-glutamate. It functions in the pathway amino-acid degradation; L-histidine degradation into L-glutamate; N-formimidoyl-L-glutamate from L-histidine: step 3/3. Its function is as follows. Catalyzes the hydrolytic cleavage of the carbon-nitrogen bond in imidazolone-5-propanoate to yield N-formimidoyl-L-glutamate. It is the third step in the universal histidine degradation pathway. The chain is Imidazolonepropionase from Desulfotalea psychrophila (strain LSv54 / DSM 12343).